Consider the following 335-residue polypeptide: Glyceraldehyde-3-phosphate dehydrogenase (335 aa).

NAD(+) contacts are provided by residues 11-12 (RI), Asp-33, and Lys-78. D-glyceraldehyde 3-phosphate contacts are provided by residues 148–150 (SST), Thr-179, 208–209 (TG), and Arg-231. Asn-313 serves as a coordination point for NAD(+).

It belongs to the glyceraldehyde-3-phosphate dehydrogenase family. Homotetramer.

Its subcellular location is the cytoplasm. It carries out the reaction D-glyceraldehyde 3-phosphate + phosphate + NAD(+) = (2R)-3-phospho-glyceroyl phosphate + NADH + H(+). Its pathway is carbohydrate degradation; glycolysis; pyruvate from D-glyceraldehyde 3-phosphate: step 1/5. This chain is Glyceraldehyde-3-phosphate dehydrogenase (GPD), found in Pleurotus sajor-caju (Oyster mushroom).